Reading from the N-terminus, the 196-residue chain is MAPQIDAVILAGGMARRMGGNDKGLVDLNGQAMICHTINKLSTQVDQILINANRNQAQYEQWGYTVFSDQDSGYLGPLAGMVTALKQTQADYLLVVPCDCPMLPTDLTARLLAALEQQQADLAVASDGEYEQPVVLLLKPHLAASMQAFLDAGERKIDFWYRQHKVAVESFADQPNAFVNINTPEQKQQLATQIAK.

GTP-binding positions include Leu-10–Gly-12, Lys-23, Asn-51, Asp-69, and Asp-99. Asp-99 provides a ligand contact to Mg(2+).

This sequence belongs to the MobA family. In terms of assembly, monomer. Mg(2+) serves as cofactor.

Its subcellular location is the cytoplasm. It catalyses the reaction Mo-molybdopterin + GTP + H(+) = Mo-molybdopterin guanine dinucleotide + diphosphate. Its function is as follows. Transfers a GMP moiety from GTP to Mo-molybdopterin (Mo-MPT) cofactor (Moco or molybdenum cofactor) to form Mo-molybdopterin guanine dinucleotide (Mo-MGD) cofactor. This Shewanella frigidimarina (strain NCIMB 400) protein is Molybdenum cofactor guanylyltransferase.